A 252-amino-acid chain; its full sequence is GTP cyclohydrolase 1 type 2 homolog (252 aa).

A divalent metal cation contacts are provided by histidine 65, histidine 66, aspartate 103, histidine 220, and glutamate 224.

This sequence belongs to the GTP cyclohydrolase I type 2/NIF3 family. Homohexamer.

The polypeptide is GTP cyclohydrolase 1 type 2 homolog (Pseudomonas aeruginosa (strain ATCC 15692 / DSM 22644 / CIP 104116 / JCM 14847 / LMG 12228 / 1C / PRS 101 / PAO1)).